Consider the following 128-residue polypeptide: Sulfurtransferase TusD (128 aa).

Cys78 serves as the catalytic Cysteine persulfide intermediate.

The protein belongs to the DsrE/TusD family. In terms of assembly, heterohexamer, formed by a dimer of trimers. The hexameric TusBCD complex contains 2 copies each of TusB, TusC and TusD. The TusBCD complex interacts with TusE.

The protein localises to the cytoplasm. Its function is as follows. Part of a sulfur-relay system required for 2-thiolation of 5-methylaminomethyl-2-thiouridine (mnm(5)s(2)U) at tRNA wobble positions. Accepts sulfur from TusA and transfers it in turn to TusE. The chain is Sulfurtransferase TusD from Salmonella agona (strain SL483).